A 300-amino-acid chain; its full sequence is Hairy/enhancer-of-split related with YRPW motif protein 1 (300 aa).

A disordered region spans residues 1-52 (MKRGHDYSSSDSELDENIEVEKESADENGNLSSAAGSMSPSTSSQILARKRR). A compositionally biased stretch (low complexity) spans 32-44 (SSAAGSMSPSTSS). Residues 48 to 103 (ARKRRRGIIEKRRRDRINNSLSELRRLVPSAFEKQGSAKLEKAEILQMTVDHLKML) form the bHLH domain. In terms of domain architecture, Orange spans 121-157 (YRSLGFRECLAEVARYLSIIEGMDTTDPLRVRLVSHL). The segment covering 199–210 (AHTSANSTSSST) has biased composition (low complexity). 2 disordered regions span residues 199–232 (AHTS…LRVP) and 278–300 (LSPT…IGAF). The YRPW motif signature appears at 290-293 (YRPW).

The protein belongs to the HEY family. In terms of assembly, efficient DNA binding requires dimerization with another bHLH protein. Binds DNA in the form of homodimer or more strongly as a heterodimer with hes1/hairy1 or hes4/hairy2b. Also weakly interacts with the bHLH proteins hes2, neurod1 and neurod4/ath3. Interacts (via Orange domain) with ccdc89/boip (via C-terminus).

The protein localises to the nucleus. In terms of biological role, downstream effector of Notch signaling. Transcriptional repressor which binds preferentially to the canonical E box sequence 5'-CACGTG-3'. Acts as a suppressor of neurogenesis by antagonizing proneural gene function. Functions during floorplate development. Plays a role in pronephros formation in the inhibition of distal tubule and duct cell fates and the promotion of glomus and proximal tubule formation. The polypeptide is Hairy/enhancer-of-split related with YRPW motif protein 1 (hey1) (Xenopus tropicalis (Western clawed frog)).